A 259-amino-acid chain; its full sequence is Acyl-[acyl-carrier-protein]--UDP-N-acetylglucosamine O-acyltransferase (259 aa).

The protein belongs to the transferase hexapeptide repeat family. LpxA subfamily. As to quaternary structure, homotrimer.

The protein resides in the cytoplasm. It carries out the reaction a (3R)-hydroxyacyl-[ACP] + UDP-N-acetyl-alpha-D-glucosamine = a UDP-3-O-[(3R)-3-hydroxyacyl]-N-acetyl-alpha-D-glucosamine + holo-[ACP]. It functions in the pathway glycolipid biosynthesis; lipid IV(A) biosynthesis; lipid IV(A) from (3R)-3-hydroxytetradecanoyl-[acyl-carrier-protein] and UDP-N-acetyl-alpha-D-glucosamine: step 1/6. In terms of biological role, involved in the biosynthesis of lipid A, a phosphorylated glycolipid that anchors the lipopolysaccharide to the outer membrane of the cell. This Psychrobacter cryohalolentis (strain ATCC BAA-1226 / DSM 17306 / VKM B-2378 / K5) protein is Acyl-[acyl-carrier-protein]--UDP-N-acetylglucosamine O-acyltransferase.